Consider the following 335-residue polypeptide: Ferrochelatase (335 aa).

Residues H211 and E290 each coordinate Fe cation.

The protein belongs to the ferrochelatase family.

It is found in the cytoplasm. The catalysed reaction is heme b + 2 H(+) = protoporphyrin IX + Fe(2+). It functions in the pathway porphyrin-containing compound metabolism; protoheme biosynthesis; protoheme from protoporphyrin-IX: step 1/1. Its function is as follows. Catalyzes the ferrous insertion into protoporphyrin IX. This Sulfurihydrogenibium sp. (strain YO3AOP1) protein is Ferrochelatase.